The chain runs to 204 residues: Holliday junction branch migration complex subunit RuvA (204 aa).

Residues 1-63 (MIGKLSGKAD…EEHIHLYGFL (63 aa)) are domain I. The domain II stretch occupies residues 64–142 (TLEEKNFFNL…KISSSSAIKD (79 aa)). The interval 143 to 153 (SLNIKNITPVT) is flexible linker. The segment at 153–204 (TSNEVMKALINLGFSRFEAQNVVQGIITQNPKISIDELIKTALKNRNSKFFS) is domain III.

It belongs to the RuvA family. In terms of assembly, homotetramer. Forms an RuvA(8)-RuvB(12)-Holliday junction (HJ) complex. HJ DNA is sandwiched between 2 RuvA tetramers; dsDNA enters through RuvA and exits via RuvB. An RuvB hexamer assembles on each DNA strand where it exits the tetramer. Each RuvB hexamer is contacted by two RuvA subunits (via domain III) on 2 adjacent RuvB subunits; this complex drives branch migration. In the full resolvosome a probable DNA-RuvA(4)-RuvB(12)-RuvC(2) complex forms which resolves the HJ.

It is found in the cytoplasm. Its function is as follows. The RuvA-RuvB-RuvC complex processes Holliday junction (HJ) DNA during genetic recombination and DNA repair, while the RuvA-RuvB complex plays an important role in the rescue of blocked DNA replication forks via replication fork reversal (RFR). RuvA specifically binds to HJ cruciform DNA, conferring on it an open structure. The RuvB hexamer acts as an ATP-dependent pump, pulling dsDNA into and through the RuvAB complex. HJ branch migration allows RuvC to scan DNA until it finds its consensus sequence, where it cleaves and resolves the cruciform DNA. The protein is Holliday junction branch migration complex subunit RuvA of Rickettsia canadensis (strain McKiel).